A 501-amino-acid chain; its full sequence is Cobyric acid synthase (501 aa).

The 196-residue stretch at 251–446 (NIDIAIIRLS…LHGIFDSEEF (196 aa)) folds into the GATase cobBQ-type domain. Cys332 acts as the Nucleophile in catalysis. Residue His438 is part of the active site.

This sequence belongs to the CobB/CobQ family. CobQ subfamily.

Its pathway is cofactor biosynthesis; adenosylcobalamin biosynthesis. Functionally, catalyzes amidations at positions B, D, E, and G on adenosylcobyrinic A,C-diamide. NH(2) groups are provided by glutamine, and one molecule of ATP is hydrogenolyzed for each amidation. This Clostridium botulinum (strain Alaska E43 / Type E3) protein is Cobyric acid synthase.